The following is a 712-amino-acid chain: Satratoxin biosynthesis SC3 cluster transcription factor SAT20 (712 aa).

4 stretches are compositionally biased toward polar residues: residues 1–10 (MPNLPGSSDS), 25–36 (CSSTKPNAAQEN), 131–145 (SEPS…WPSL), and 269–282 (SLPS…SSTG). 3 disordered regions span residues 1–43 (MPNL…ELAQ), 115–145 (SQNA…WPSL), and 264–294 (PVSG…KADR). Positions 306 to 339 (CFRCRMYKENCDPGLPCKNCMRVQVTRRTFFGPC) form a DNA-binding region, zn(2)-C6 fungal-type. The stretch at 530 to 560 (QIQIMVAQVMLDKQKNALKRLQERALSKNRH) forms a coiled coil.

Its subcellular location is the nucleus. Its function is as follows. Transcriptional regulator that may regulate the expression of the satratoxin biosynthesis SC3 cluster, one of the 3 clusters involved in the biosynthesis of satratoxins, trichothecene mycotoxins that are associated with human food poisonings. This chain is Satratoxin biosynthesis SC3 cluster transcription factor SAT20, found in Stachybotrys chartarum (strain CBS 109288 / IBT 7711) (Toxic black mold).